We begin with the raw amino-acid sequence, 165 residues long: MQSMKDAAASAKAGMEKAKASMQEKVDQMKTRDPNEKEMARERKEERQEDAELRKQEARHHNATAGHVGGGGIGGTGYTTAGYNIGDTGGYGGTGGHDNRGYPTAGSGYDTGRQDDLSSMGFGGDTEGAYGTTGNQDFPNAASNNAGTRRNTRGGTQDDPYYRSY.

A compositionally biased stretch (low complexity) spans 1–13 (MQSMKDAAASAKA). 2 disordered regions span residues 1-76 (MQSM…IGGT) and 92-165 (GGTG…YRSY). Positions 14-60 (GMEKAKASMQEKVDQMKTRDPNEKEMARERKEERQEDAELRKQEARH) are enriched in basic and acidic residues. The segment covering 67-76 (HVGGGGIGGT) has biased composition (gly residues). Over residues 132–155 (TTGNQDFPNAASNNAGTRRNTRGG) the composition is skewed to polar residues.

The protein belongs to the LEA type 1 family.

Its function is as follows. LEA proteins are late embryonic proteins abundant in higher plant seed embryos. There are two subsets of LEA proteins (5a and 5b), the first ones are expressed when the cotyledon weight reach 80 mg and the second set are expressed above 100 mg. The function of those proteins is not known. This is Late embryogenesis abundant protein D-113 from Gossypium hirsutum (Upland cotton).